Consider the following 521-residue polypeptide: Cytochrome P450 52A9 (521 aa).

Position 468 (Cys468) interacts with heme.

It belongs to the cytochrome P450 family. It depends on heme as a cofactor.

Its subcellular location is the membrane. In terms of biological role, together with an NADPH cytochrome P450 the enzyme system catalyzes the terminal hydroxylation as the first step in the assimilation of alkanes and fatty acids. This is Cytochrome P450 52A9 (CYP52A9) from Candida maltosa (Yeast).